The chain runs to 279 residues: Glutamate racemase (279 aa).

Substrate is bound by residues 13 to 14 (DS) and 45 to 46 (YG). Cysteine 76 acts as the Proton donor/acceptor in catalysis. 77–78 (NT) lines the substrate pocket. Cysteine 185 (proton donor/acceptor) is an active-site residue. 186 to 187 (TH) contributes to the substrate binding site.

This sequence belongs to the aspartate/glutamate racemases family.

It carries out the reaction L-glutamate = D-glutamate. It functions in the pathway cell wall biogenesis; peptidoglycan biosynthesis. In terms of biological role, provides the (R)-glutamate required for cell wall biosynthesis. The polypeptide is Glutamate racemase (Picosynechococcus sp. (strain ATCC 27264 / PCC 7002 / PR-6) (Agmenellum quadruplicatum)).